The following is a 568-amino-acid chain: Nucleoprotein (568 aa).

The binding site for the cap structure m7GTP stretch occupies residues 54–240 (MRKEKRDDSD…IDGNKSAINI (187 aa)). Mn(2+)-binding residues include Asp-388 and Glu-390. Glu-398, Cys-505, His-508, and Cys-528 together coordinate Zn(2+). Residue Asp-532 participates in Mn(2+) binding.

This sequence belongs to the arenaviridae nucleocapsid protein family. As to quaternary structure, homomultimerizes to form the nucleocapsid. Binds to viral genomic RNA. Interacts with glycoprotein G2. Interacts with protein Z; this interaction probably directs the encapsidated genome to budding sites. Interacts with protein L; this interaction does not interfere with Z-L interaction. Interacts with host IKBKE (via Protein kinase domain); the interaction inhibits IKBKE kinase activity.

Its subcellular location is the virion. It localises to the host cytoplasm. Encapsidates the genome, protecting it from nucleases. The encapsidated genomic RNA is termed the nucleocapsid (NC). Serves as template for viral transcription and replication. The increased presence of protein N in host cell does not seem to trigger the switch from transcription to replication as observed in other negative strain RNA viruses. Through the interaction with host IKBKE, strongly inhibits the phosphorylation and nuclear translocation of host IRF3, a protein involved in interferon activation pathway, leading to the inhibition of interferon-beta and IRF3-dependent promoters activation. Also encodes a functional 3'-5' exoribonuclease that degrades preferentially dsRNA substrates and thereby participates in the suppression of interferon induction. This Praomys (African soft-furred rats) protein is Nucleoprotein.